Consider the following 499-residue polypeptide: Lysine--tRNA ligase (499 aa).

Mg(2+)-binding residues include glutamate 408 and glutamate 415.

The protein belongs to the class-II aminoacyl-tRNA synthetase family. In terms of assembly, homodimer. The cofactor is Mg(2+).

It localises to the cytoplasm. It catalyses the reaction tRNA(Lys) + L-lysine + ATP = L-lysyl-tRNA(Lys) + AMP + diphosphate. The protein is Lysine--tRNA ligase of Bacillus cytotoxicus (strain DSM 22905 / CIP 110041 / 391-98 / NVH 391-98).